The sequence spans 182 residues: Keratin, type II cytoskeletal 68 kDa, component IA (182 aa).

The IF rod domain maps to 1 to 66; it reads DAEQHGEVAL…TLLEGEECRM (66 aa). Positions 1 to 66 are coil 2B; it reads DAEQHGEVAL…TLLEGEECRM (66 aa). The segment at 67–86 is H2 subdomain; it reads SGECQSSVSIEMVHNTTSSS. The tract at residues 67–182 is tail; that stretch reads SGECQSSVSI…SQSQRSHHKL (116 aa). Residues 87–162 form a V2 subdomain region; sequence SGGSGALGGG…GSCAVSGVGG (76 aa). A compositionally biased stretch (gly residues) spans 104-124; that stretch reads GSGGLGSGSLGSGRLGSGGRG. The segment at 104 to 182 is disordered; it reads GSGGLGSGSL…SQSQRSHHKL (79 aa). Composition is skewed to low complexity over residues 144-158 and 165-176; these read VRGSVSNSGGSCAVS and SVRVTQSSSQSQ. Residues 163 to 182 are E2 subdomain; the sequence is RGSVRVTQSSSQSQRSHHKL.

The protein belongs to the intermediate filament family. As to quaternary structure, heterotetramer of two type I and two type II keratins.

The chain is Keratin, type II cytoskeletal 68 kDa, component IA from Bos taurus (Bovine).